The chain runs to 227 residues: ATP-dependent dethiobiotin synthetase BioD (227 aa).

Asp-13 to Tyr-18 is an ATP binding site. Mg(2+) is bound at residue Thr-17. Lys-38 is a catalytic residue. Position 42 (Ser-42) interacts with substrate. Residues Asp-55, Glu-116–Gly-119, and Asn-179–Asn-180 contribute to the ATP site. Asp-55 and Glu-116 together coordinate Mg(2+).

The protein belongs to the dethiobiotin synthetase family. As to quaternary structure, homodimer. Mg(2+) is required as a cofactor.

The protein localises to the cytoplasm. It catalyses the reaction (7R,8S)-7,8-diammoniononanoate + CO2 + ATP = (4R,5S)-dethiobiotin + ADP + phosphate + 3 H(+). It functions in the pathway cofactor biosynthesis; biotin biosynthesis; biotin from 7,8-diaminononanoate: step 1/2. In terms of biological role, catalyzes a mechanistically unusual reaction, the ATP-dependent insertion of CO2 between the N7 and N8 nitrogen atoms of 7,8-diaminopelargonic acid (DAPA, also called 7,8-diammoniononanoate) to form a ureido ring. The chain is ATP-dependent dethiobiotin synthetase BioD from Clostridium botulinum (strain Eklund 17B / Type B).